A 213-amino-acid chain; its full sequence is Protein DMP4 (213 aa).

Helical transmembrane passes span 51 to 71, 78 to 98, 142 to 162, and 180 to 200; these read LANLLPTGTVLAFQLLSPIFS, LVSKIMTSTLVAICGFSCFIL, FIDFVHAFMSLFVFGAVVLFD, and VLTALPVGVGVFSSMLFATFP.

This sequence belongs to the plant DMP1 protein family. As to expression, expressed in leaves, flowers and siliques, especially in vascular tissues.

The protein resides in the vacuole membrane. Its function is as follows. Involved in membrane remodeling. This chain is Protein DMP4, found in Arabidopsis thaliana (Mouse-ear cress).